The chain runs to 846 residues: Pseudolaratriene synthase, chloroplastic (846 aa).

The transit peptide at 1–58 (MSRFTSATHGLNLSIKMPISVSQVPSIRSNTSKYELQKLRSTGRSVLQTRRQLAIINM) directs the protein to the chloroplast. Mg(2+) is bound by residues Asp-595, Asp-599, and Asp-747. A DDXXD motif motif is present at residues 595-599 (DDIYD).

This sequence belongs to the terpene synthase family. It depends on Mg(2+) as a cofactor. In terms of tissue distribution, expressed in young and mature roots. Expressed at low levels in barks.

It is found in the plastid. Its subcellular location is the chloroplast. The catalysed reaction is (2E,6E,10E)-geranylgeranyl diphosphate = pseudolaratriene + diphosphate. It participates in terpene metabolism. Functionally, converts geranylgeranyl diphosphate to an new 5,7-fused bicyclic diterpene, named pseudolaratriene. Catalyzes the first committed step in pseudolaric acid B (PAB) biosynthesis. PAB exhibits antiproliferative activity by inhibiting microtubule polymerization, and has demonstrated antitumor properties against several cancer types. This is Pseudolaratriene synthase, chloroplastic from Pseudolarix amabilis (Golden larch).